The following is a 321-amino-acid chain: tRNA-dihydrouridine synthase B (321 aa).

FMN-binding positions include 16-18 and Q70; that span reads PMA. C100 serves as the catalytic Proton donor. FMN contacts are provided by residues K139, 200 to 202, and 224 to 225; these read NGD and GR.

It belongs to the Dus family. DusB subfamily. Requires FMN as cofactor.

The enzyme catalyses a 5,6-dihydrouridine in tRNA + NAD(+) = a uridine in tRNA + NADH + H(+). It catalyses the reaction a 5,6-dihydrouridine in tRNA + NADP(+) = a uridine in tRNA + NADPH + H(+). Functionally, catalyzes the synthesis of 5,6-dihydrouridine (D), a modified base found in the D-loop of most tRNAs, via the reduction of the C5-C6 double bond in target uridines. The polypeptide is tRNA-dihydrouridine synthase B (Yersinia pestis).